Reading from the N-terminus, the 518-residue chain is MTQLHFDNRLRQQLPGYQEEGARRREVRAAWSAVMPTPVAAPYLIAHSAEMAHVLGLDASEVASAAFAQVFGGNALYPGMQPWAVNYGGHQFGHWAGQLGDGRAISLGEAIGIDGGRYELQLKGAGPTPYSRGADGRAVLRSSIREFLCSESMHHLGVPTTRALSLVGTGDAVVRDMFYDGRPQREPGAIVCRVAPSFIRFGNFELPSARGDNALLRQWVDFTIARDFPELVGTAEALYADWFAQVCQRTAVMVAHWMRVGFVHGVMNTDNMSILGLTIDYGPYGWVDDYDPDWTPNTTDAQGRRYRFGTQPQVAYWNLGRLAQAVAPLFADQAPLQQGLNRFRDTYLACDRRDTAAKLGLAECRDEDLELIDALRALMRDAEMDMTLTFRGLIDLSPVHPDPAQLHDAFYDDHKRVASASQLQEWLQRYAARLQQDALSPDERRALMRLANPRYVLRNYLAQQAIDQAEQGDPSGVQELLEVMRRPYDDQSGRAAFAARRPEWARDRAGCSMLSCSS.

Residues Gly100, Gly102, Arg103, Lys123, Asp135, Gly136, Arg193, and Arg200 each coordinate ATP. Asp270 serves as the catalytic Proton acceptor. Positions 271 and 280 each coordinate Mg(2+). An ATP-binding site is contributed by Asp280.

Belongs to the SELO family. Mg(2+) serves as cofactor. The cofactor is Mn(2+).

It carries out the reaction L-seryl-[protein] + ATP = 3-O-(5'-adenylyl)-L-seryl-[protein] + diphosphate. It catalyses the reaction L-threonyl-[protein] + ATP = 3-O-(5'-adenylyl)-L-threonyl-[protein] + diphosphate. The enzyme catalyses L-tyrosyl-[protein] + ATP = O-(5'-adenylyl)-L-tyrosyl-[protein] + diphosphate. The catalysed reaction is L-histidyl-[protein] + UTP = N(tele)-(5'-uridylyl)-L-histidyl-[protein] + diphosphate. It carries out the reaction L-seryl-[protein] + UTP = O-(5'-uridylyl)-L-seryl-[protein] + diphosphate. It catalyses the reaction L-tyrosyl-[protein] + UTP = O-(5'-uridylyl)-L-tyrosyl-[protein] + diphosphate. Its function is as follows. Nucleotidyltransferase involved in the post-translational modification of proteins. It can catalyze the addition of adenosine monophosphate (AMP) or uridine monophosphate (UMP) to a protein, resulting in modifications known as AMPylation and UMPylation. The sequence is that of Protein nucleotidyltransferase YdiU from Xanthomonas oryzae pv. oryzae (strain PXO99A).